We begin with the raw amino-acid sequence, 120 residues long: Large ribosomal subunit protein uL18 (120 aa).

This sequence belongs to the universal ribosomal protein uL18 family. As to quaternary structure, part of the 50S ribosomal subunit; part of the 5S rRNA/L5/L18/L25 subcomplex. Contacts the 5S and 23S rRNAs.

In terms of biological role, this is one of the proteins that bind and probably mediate the attachment of the 5S RNA into the large ribosomal subunit, where it forms part of the central protuberance. This is Large ribosomal subunit protein uL18 from Methylorubrum populi (strain ATCC BAA-705 / NCIMB 13946 / BJ001) (Methylobacterium populi).